We begin with the raw amino-acid sequence, 423 residues long: ATP-dependent Clp protease ATP-binding subunit ClpX (423 aa).

One can recognise a ClpX-type ZB domain in the interval 1-50; sequence MTDDTEYRCSFCGKEHHQVDDLIAGPDVRICSECVVLSCEIVEDRRNEAL. The Zn(2+) site is built by Cys-9, Cys-12, Cys-31, and Cys-34. ATP is bound at residue 126 to 133; the sequence is PTGCGKTY.

Belongs to the ClpX chaperone family. In terms of assembly, component of the ClpX-ClpP complex. Forms a hexameric ring that, in the presence of ATP, binds to fourteen ClpP subunits assembled into a disk-like structure with a central cavity, resembling the structure of eukaryotic proteasomes.

Functionally, ATP-dependent specificity component of the Clp protease. It directs the protease to specific substrates. Can perform chaperone functions in the absence of ClpP. The chain is ATP-dependent Clp protease ATP-binding subunit ClpX from Tropheryma whipplei (strain TW08/27) (Whipple's bacillus).